The sequence spans 370 residues: Dual-specificity RNA methyltransferase RlmN (370 aa).

E93 serves as the catalytic Proton acceptor. In terms of domain architecture, Radical SAM core spans 99 to 337; the sequence is EEGRGTLCVS…VTTVRKTRGD (239 aa). A disulfide bridge links C106 with C343. [4Fe-4S] cluster contacts are provided by C113, C117, and C120. Residues 167–168, S199, 221–223, and N300 each bind S-adenosyl-L-methionine; these read GE and SLH. The active-site S-methylcysteine intermediate is C343.

This sequence belongs to the radical SAM superfamily. RlmN family. Requires [4Fe-4S] cluster as cofactor.

It is found in the cytoplasm. It catalyses the reaction adenosine(2503) in 23S rRNA + 2 reduced [2Fe-2S]-[ferredoxin] + 2 S-adenosyl-L-methionine = 2-methyladenosine(2503) in 23S rRNA + 5'-deoxyadenosine + L-methionine + 2 oxidized [2Fe-2S]-[ferredoxin] + S-adenosyl-L-homocysteine. The enzyme catalyses adenosine(37) in tRNA + 2 reduced [2Fe-2S]-[ferredoxin] + 2 S-adenosyl-L-methionine = 2-methyladenosine(37) in tRNA + 5'-deoxyadenosine + L-methionine + 2 oxidized [2Fe-2S]-[ferredoxin] + S-adenosyl-L-homocysteine. Specifically methylates position 2 of adenine 2503 in 23S rRNA and position 2 of adenine 37 in tRNAs. m2A2503 modification seems to play a crucial role in the proofreading step occurring at the peptidyl transferase center and thus would serve to optimize ribosomal fidelity. This chain is Dual-specificity RNA methyltransferase RlmN, found in Francisella tularensis subsp. tularensis (strain WY96-3418).